A 225-amino-acid polypeptide reads, in one-letter code: Ribonuclease 3 (225 aa).

Residues 7-129 (LPRLGRILGY…IIGAIYLDAD (123 aa)) enclose the RNase III domain. Mg(2+) is bound at residue Glu42. The active site involves Asp46. Residues Asp115 and Glu118 each contribute to the Mg(2+) site. Residue Glu118 is part of the active site. Residues 155–225 (DPKTLLQEHL…AAEVLERIKK (71 aa)) form the DRBM domain.

This sequence belongs to the ribonuclease III family. As to quaternary structure, homodimer. Requires Mg(2+) as cofactor.

The protein localises to the cytoplasm. It carries out the reaction Endonucleolytic cleavage to 5'-phosphomonoester.. Its function is as follows. Digests double-stranded RNA. Involved in the processing of primary rRNA transcript to yield the immediate precursors to the large and small rRNAs (23S and 16S). Processes some mRNAs, and tRNAs when they are encoded in the rRNA operon. Processes pre-crRNA and tracrRNA of type II CRISPR loci if present in the organism. This Shewanella loihica (strain ATCC BAA-1088 / PV-4) protein is Ribonuclease 3.